A 465-amino-acid polypeptide reads, in one-letter code: A-type ATP synthase subunit B (465 aa).

This sequence belongs to the ATPase alpha/beta chains family. As to quaternary structure, the A-type ATPase is composed of subunits A(3), B(3), C, D, E(1 or 2), F, H(2), I and proteolipid K(x).

The protein localises to the cell membrane. Functionally, component of the A-type ATP synthase that produces ATP from ADP in the presence of a proton gradient across the membrane. The B chain is a regulatory subunit. This Methanocaldococcus jannaschii (strain ATCC 43067 / DSM 2661 / JAL-1 / JCM 10045 / NBRC 100440) (Methanococcus jannaschii) protein is A-type ATP synthase subunit B.